The sequence spans 507 residues: ATP synthase subunit alpha, plastid (507 aa).

170-177 (GDRQTGKT) provides a ligand contact to ATP.

Belongs to the ATPase alpha/beta chains family. As to quaternary structure, F-type ATPases have 2 components, CF(1) - the catalytic core - and CF(0) - the membrane proton channel. CF(1) has five subunits: alpha(3), beta(3), gamma(1), delta(1), epsilon(1). CF(0) has four main subunits: a, b, b' and c.

The protein localises to the plastid membrane. It catalyses the reaction ATP + H2O + 4 H(+)(in) = ADP + phosphate + 5 H(+)(out). Produces ATP from ADP in the presence of a proton gradient across the membrane. The alpha chain is a regulatory subunit. This chain is ATP synthase subunit alpha, plastid, found in Cuscuta obtusiflora (Peruvian dodder).